We begin with the raw amino-acid sequence, 332 residues long: Ferredoxin--NADP reductase 1 (332 aa).

Residues Asp35, Lys43, Phe48, Val88, Phe123, Asp284, and Thr325 each contribute to the FAD site.

It belongs to the ferredoxin--NADP reductase type 2 family. In terms of assembly, homodimer. It depends on FAD as a cofactor.

The enzyme catalyses 2 reduced [2Fe-2S]-[ferredoxin] + NADP(+) + H(+) = 2 oxidized [2Fe-2S]-[ferredoxin] + NADPH. The protein is Ferredoxin--NADP reductase 1 of Listeria monocytogenes serovar 1/2a (strain ATCC BAA-679 / EGD-e).